The following is a 509-amino-acid chain: Ribonuclease Y (509 aa).

The chain crosses the membrane as a helical span at residues 3-23; sequence WILYVILPAVCIILGWTIRWL. Positions 199–284 constitute a KH domain; it reads TVSTVSLPSD…EIVQKVTREI (86 aa). The 94-residue stretch at 325-418 folds into the HD domain; sequence VLQHSKEVAI…VQIADAISAA (94 aa).

It belongs to the RNase Y family.

The protein localises to the cell membrane. Functionally, endoribonuclease that initiates mRNA decay. The sequence is that of Ribonuclease Y from Treponema denticola (strain ATCC 35405 / DSM 14222 / CIP 103919 / JCM 8153 / KCTC 15104).